A 735-amino-acid polypeptide reads, in one-letter code: 5-methyltetrahydropteroyltriglutamate--homocysteine methyltransferase (735 aa).

5-methyltetrahydropteroyltri-L-glutamate-binding positions include 15–18 and Lys-104; that span reads REFK. L-homocysteine-binding positions include 409–411 and Glu-462; that span reads IGS. Residues 409–411 and Glu-462 each bind L-methionine; that span reads IGS. 5-methyltetrahydropteroyltri-L-glutamate contacts are provided by residues 493 to 494 and Trp-539; that span reads RC. Asp-577 contributes to the L-homocysteine binding site. Asp-577 provides a ligand contact to L-methionine. Residue Glu-583 participates in 5-methyltetrahydropteroyltri-L-glutamate binding. Zn(2+) contacts are provided by His-618, Cys-620, and Glu-642. The active-site Proton donor is His-672. Cys-704 provides a ligand contact to Zn(2+).

Belongs to the vitamin-B12 independent methionine synthase family. Requires Zn(2+) as cofactor.

The catalysed reaction is 5-methyltetrahydropteroyltri-L-glutamate + L-homocysteine = tetrahydropteroyltri-L-glutamate + L-methionine. The protein operates within amino-acid biosynthesis; L-methionine biosynthesis via de novo pathway; L-methionine from L-homocysteine (MetE route): step 1/1. Functionally, catalyzes the transfer of a methyl group from 5-methyltetrahydrofolate to homocysteine resulting in methionine formation. The chain is 5-methyltetrahydropteroyltriglutamate--homocysteine methyltransferase from Thermotoga petrophila (strain ATCC BAA-488 / DSM 13995 / JCM 10881 / RKU-1).